Here is a 509-residue protein sequence, read N- to C-terminus: Maturase K (509 aa).

This sequence belongs to the intron maturase 2 family. MatK subfamily.

The protein localises to the plastid. It is found in the chloroplast. Functionally, usually encoded in the trnK tRNA gene intron. Probably assists in splicing its own and other chloroplast group II introns. This chain is Maturase K, found in Avicennia marina (Grey mangrove).